We begin with the raw amino-acid sequence, 505 residues long: Outer capsid protein VP5 (505 aa).

The interval 1 to 42 (MGKFTSFLKRAGSATKKALTSDAAKRMYKMAGKTLQKVVESE) is involved in membrane permeabilization.

Belongs to the orbivirus VP5 family.

The protein resides in the virion. In terms of biological role, VP5 protein is one of the two proteins (with VP2) which constitute the virus particle outer capsid. Acts as a membrane permeabilization protein that mediates release of viral particles from endosomal compartments into the cytoplasm. Permeabilization activity is probably negatively regulated by VP2 and is triggered by endosomal degradation of VP2 and exposure to low pH. This is Outer capsid protein VP5 (Segment-6) from African horse sickness virus 9 (AHSV-9).